We begin with the raw amino-acid sequence, 936 residues long: MTLLDTEQALLAIHTVLQLKLQQRRTREELENQGIMPPLKSPAAFHEQRRSLERARTEDYLKRKIRSRPERAELVRMHILEETSAEPSLQAKQIKLKRARLADDLNEKISQRPGPMELVVKNILPVETSLKEVIIDVDYPEVVDNSSFDEDSSDALSPEQPASQESQGSIPSPIENRPSETTQIPALSPSHAFSCVQFGTDAFNQDSLQSTAITISNGLTASICKSLPALVKQSQPKPSFEKSQRIKKPKEPKPKVKKLKYHQYIPPDQKQKGTPAMDSSYAKLLQQQQLFLQLQIINQQQHQHYNYQTILPAPPKPLPDQQNTNSSSTTTVRSMSTVAPSTLATPTITRQNSNVAVGGRTGPLPHNLDEMKVAELKLELKHRGLPVSGTKIDLIERLKASQDPSTATAASAKPTPVQQAKPPEVVPIVSSSCLTTREPIKLCSTSSTPPGSPCPSEVSVVSMDEVSMISDALGETVACPVTQQVQQNPAAEKSPPDARDKDLMLREKDRQIEELTQRLKQKQELVERLRQQLEQEKRTPQHSTDDQQALILAVKQEPLPLTVDSINKKASSIVKQELNTAIICQQEPQLLIGPVSSGIEGKVDNSAGTKLVFTLTNPSSQLPEENRQIVLQKVPTPPSSLHPNNSLPKQEVLLSCCALQNQKPALQLVPGTVLSLSSSNLQPMLNMNGFQKWHGEALDSLQKQLVHNESPATPPQQPEPEPPPHSIFLTHSSPQWSKNPPGYDEAMKQQPNSCEDGRPGCLQAVDFFDVLIKNLDIPSEFKDYLVPCLKQTSPSHQAAQMVPQVEMAPPPSPIHSALGRLEDFLESSTGTPLLRGHQDGPSSMPLIDDLHSQMLSSLAILDHPPSPMDTSDLHFSPIGNSLGLDISEPPLDGMDWLELSEPPAMNLTPLSTFTPSVFSTDFLDSHDLHLHWDSCL.

3 RPEL repeats span residues 15–40 (TVLQ…PPLK), 59–84 (DYLK…EETS), and 103–128 (DDLN…PVET). The short motif at 62–100 (KRKIRSRPERAELVRMHILEETSAEPSLQAKQIKLKRAR) is the Bipartite Nuclear localization signal element. Disordered stretches follow at residues 146-185 (SSFD…TQIP), 234-258 (SQPK…KVKK), and 401-422 (SQDP…QAKP). Over residues 160–170 (QPASQESQGSI) the composition is skewed to polar residues. A compositionally biased stretch (basic and acidic residues) spans 239–254 (SFEKSQRIKKPKEPKP). Residues 368-402 (LDEMKVAELKLELKHRGLPVSGTKIDLIERLKASQ) enclose the SAP domain. Residues 404-416 (PSTATAASAKPTP) are compositionally biased toward low complexity. A coiled-coil region spans residues 497–542 (DARDKDLMLREKDRQIEELTQRLKQKQELVERLRQQLEQEKRTPQH). A disordered region spans residues 707–755 (HNESPATPPQQPEPEPPPHSIFLTHSSPQWSKNPPGYDEAMKQQPNSCE). The span at 712 to 725 (ATPPQQPEPEPPPH) shows a compositional bias: pro residues. Residues 729-738 (LTHSSPQWSK) are compositionally biased toward polar residues.

Interacts with srf, forming the srf-mrtfa nuclear complex which binds the 5'-CArG-3' consensus motif (CArG box) on DNA via srf. Interacts (via RPEL repeats) with globular actin (G-actin), thereby regulating its subcellular location and activity of the complex formed with srf.

The protein resides in the cytoplasm. It localises to the nucleus. Functionally, transcription coactivator that associates with the serum response factor (srf) transcription factor to control expression of genes regulating the cytoskeleton during development, morphogenesis and cell migration. The srf-mrtfa complex activity responds to Rho GTPase-induced changes in cellular globular actin (G-actin) concentration, thereby coupling cytoskeletal gene expression to cytoskeletal dynamics. Mrtfa binds G-actin via its RPEL repeats, regulating activity of the mrtfa-srf complex. Activity is also regulated by filamentous actin (F-actin) in the nucleus. This Xenopus laevis (African clawed frog) protein is Myocardin-related transcription factor A (mrtfa).